The following is a 325-amino-acid chain: 5-dehydro-2-deoxygluconokinase (325 aa).

It belongs to the carbohydrate kinase PfkB family.

It carries out the reaction 5-dehydro-2-deoxy-D-gluconate + ATP = 6-phospho-5-dehydro-2-deoxy-D-gluconate + ADP + H(+). Its pathway is polyol metabolism; myo-inositol degradation into acetyl-CoA; acetyl-CoA from myo-inositol: step 5/7. In terms of biological role, catalyzes the phosphorylation of 5-dehydro-2-deoxy-D-gluconate (2-deoxy-5-keto-D-gluconate or DKG) to 6-phospho-5-dehydro-2-deoxy-D-gluconate (DKGP). The sequence is that of 5-dehydro-2-deoxygluconokinase from Listeria innocua serovar 6a (strain ATCC BAA-680 / CLIP 11262).